The sequence spans 251 residues: VYITNAGDITLSPKGVEMAHVNNVRLYVHGERWTASQPGDWGSQWQVEAPIFVDHGYVSQDCYYPIIKGRSVITNQGFVTAVDLGIRRVNNNWGQAIIRVGSAEACPAAGHPNAVFEFHYDGTFYSPGNGHFNDVYIRSDGRLKINKKELENGALEKVCRLKVYTYDKVKSIKDRSVIKREVGIIAQDLEKELPEAVSKVEVDGSDVLTISNSAVNALLIKAIQEMSEEIKELKTPLFTKIARKISKYFKF.

Residues 134–137 (DVYI) form an interaction with the receptor-recognizing protein gp38 region. Residues 139–237 (SDGRLKINKK…EEIKELKTPL (99 aa)) form the Peptidase S74 domain.

It belongs to the S16-like long tail fiber protein Gp37 family. In terms of assembly, homotrimer. Interacts with the receptor-recognizing protein Gp38. Post-translationally, proteolytic cleavage and release of the chaperone in the host cytosol stabilizes the folded protein.

It is found in the virion. Its function is as follows. Constitues the trimeric tip of the long tail fiber that mediates the attachment to the host receptor, together with the receptor-recognizing protein Gp38. Functionally, the C-terminal chaperone protein mediates homotrimerization and proper folding of the catalytic trimer. In Selenomonas ruminantium (Bacteriophage M1), this protein is Long tail fiber protein Gp37 (37).